Here is a 213-residue protein sequence, read N- to C-terminus: Orotate phosphoribosyltransferase (213 aa).

Position 26 (Lys26) interacts with 5-phospho-alpha-D-ribose 1-diphosphate. 34 to 35 (FF) provides a ligand contact to orotate. 5-phospho-alpha-D-ribose 1-diphosphate is bound by residues 72–73 (YK), Arg99, Lys100, Lys103, His105, and 124–132 (DDVITAGTA). Residues Thr128 and Arg156 each contribute to the orotate site.

Belongs to the purine/pyrimidine phosphoribosyltransferase family. PyrE subfamily. Homodimer. Mg(2+) is required as a cofactor.

The catalysed reaction is orotidine 5'-phosphate + diphosphate = orotate + 5-phospho-alpha-D-ribose 1-diphosphate. It participates in pyrimidine metabolism; UMP biosynthesis via de novo pathway; UMP from orotate: step 1/2. In terms of biological role, catalyzes the transfer of a ribosyl phosphate group from 5-phosphoribose 1-diphosphate to orotate, leading to the formation of orotidine monophosphate (OMP). The protein is Orotate phosphoribosyltransferase of Salmonella arizonae (strain ATCC BAA-731 / CDC346-86 / RSK2980).